The following is a 187-amino-acid chain: UPF0301 protein VS_2679 (187 aa).

This sequence belongs to the UPF0301 (AlgH) family.

The polypeptide is UPF0301 protein VS_2679 (Vibrio atlanticus (strain LGP32) (Vibrio splendidus (strain Mel32))).